Here is a 163-residue protein sequence, read N- to C-terminus: Neurotrophin-3 (163 aa).

The N-terminal stretch at 1 to 3 is a signal peptide; it reads IQS. Positions 4-119 are excised as a propeptide; it reads TSMDQGILTE…VLNRTSRRKR (116 aa). Asn-112 is a glycosylation site (N-linked (GlcNAc...) asparagine).

It belongs to the NGF-beta family.

The protein localises to the secreted. Functionally, seems to promote the survival of visceral and proprioceptive sensory neurons. The protein is Neurotrophin-3 (NTF3) of Epicrates cenchria (Rainbow boa).